The primary structure comprises 572 residues: Proline--tRNA ligase (572 aa).

Belongs to the class-II aminoacyl-tRNA synthetase family. ProS type 1 subfamily. In terms of assembly, homodimer.

Its subcellular location is the cytoplasm. It catalyses the reaction tRNA(Pro) + L-proline + ATP = L-prolyl-tRNA(Pro) + AMP + diphosphate. Functionally, catalyzes the attachment of proline to tRNA(Pro) in a two-step reaction: proline is first activated by ATP to form Pro-AMP and then transferred to the acceptor end of tRNA(Pro). As ProRS can inadvertently accommodate and process non-cognate amino acids such as alanine and cysteine, to avoid such errors it has two additional distinct editing activities against alanine. One activity is designated as 'pretransfer' editing and involves the tRNA(Pro)-independent hydrolysis of activated Ala-AMP. The other activity is designated 'posttransfer' editing and involves deacylation of mischarged Ala-tRNA(Pro). The misacylated Cys-tRNA(Pro) is not edited by ProRS. The polypeptide is Proline--tRNA ligase (Salmonella newport (strain SL254)).